Reading from the N-terminus, the 346-residue chain is Coproporphyrin III ferrochelatase (346 aa).

Positions 52 and 121 each coordinate Fe-coproporphyrin III. Residues H181 and E264 each contribute to the Fe(2+) site.

The protein belongs to the ferrochelatase family.

The protein resides in the cytoplasm. The enzyme catalyses Fe-coproporphyrin III + 2 H(+) = coproporphyrin III + Fe(2+). It functions in the pathway porphyrin-containing compound metabolism; protoheme biosynthesis. Functionally, involved in coproporphyrin-dependent heme b biosynthesis. Catalyzes the insertion of ferrous iron into coproporphyrin III to form Fe-coproporphyrin III. The protein is Coproporphyrin III ferrochelatase of Mycobacterium sp. (strain JLS).